Consider the following 218-residue polypeptide: Adenylate kinase (218 aa).

10-15 (GAGKGT) is an ATP binding site. The interval 30–59 (STGDMLRNAAKEGKPLGLEAKKIMDAGQLV) is NMP. AMP is bound by residues T31, R36, 57–59 (QLV), 85–88 (GFPR), and Q92. Positions 122–159 (GRRVHLASGRSYHVMFNPPKQEGLDDATGEPLVQRADD) are LID. Residues R123 and 132-133 (SY) each bind ATP. AMP-binding residues include R156 and R167. G203 contacts ATP.

It belongs to the adenylate kinase family. Monomer.

It is found in the cytoplasm. It catalyses the reaction AMP + ATP = 2 ADP. Its pathway is purine metabolism; AMP biosynthesis via salvage pathway; AMP from ADP: step 1/1. Functionally, catalyzes the reversible transfer of the terminal phosphate group between ATP and AMP. Plays an important role in cellular energy homeostasis and in adenine nucleotide metabolism. The chain is Adenylate kinase from Chlorobium chlorochromatii (strain CaD3).